A 465-amino-acid chain; its full sequence is Ribulose bisphosphate carboxylase large chain (465 aa).

N6,N6,N6-trimethyllysine is present on K4. Residues N113 and T163 each coordinate substrate. K165 functions as the Proton acceptor in the catalytic mechanism. K167 is a binding site for substrate. 3 residues coordinate Mg(2+): K191, D193, and E194. K191 bears the N6-carboxylysine mark. The Proton acceptor role is filled by H284. Substrate-binding residues include R285, H317, and S369.

This sequence belongs to the RuBisCO large chain family. Type I subfamily. In terms of assembly, heterohexadecamer of 8 large chains and 8 small chains; disulfide-linked. The disulfide link is formed within the large subunit homodimers. Mg(2+) is required as a cofactor. In terms of processing, the disulfide bond which can form in the large chain dimeric partners within the hexadecamer appears to be associated with oxidative stress and protein turnover.

The protein resides in the plastid. It localises to the chloroplast. It catalyses the reaction 2 (2R)-3-phosphoglycerate + 2 H(+) = D-ribulose 1,5-bisphosphate + CO2 + H2O. The catalysed reaction is D-ribulose 1,5-bisphosphate + O2 = 2-phosphoglycolate + (2R)-3-phosphoglycerate + 2 H(+). Functionally, ruBisCO catalyzes two reactions: the carboxylation of D-ribulose 1,5-bisphosphate, the primary event in carbon dioxide fixation, as well as the oxidative fragmentation of the pentose substrate in the photorespiration process. Both reactions occur simultaneously and in competition at the same active site. This chain is Ribulose bisphosphate carboxylase large chain, found in Dillenia indica (Elephant apple).